The sequence spans 545 residues: Carboxypeptidase Y homolog A (545 aa).

Positions 1–17 are cleaved as a signal peptide; sequence MKSLALALLVGGAIAAG. Positions 18 to 123 are excised as a propeptide; that stretch reads PQQQVLQAPV…KLEAYDLRVK (106 aa). 5 disulfides stabilise this stretch: Cys-177–Cys-416, Cys-311–Cys-325, Cys-335–Cys-358, Cys-342–Cys-351, and Cys-380–Cys-386. Asn-208 is a glycosylation site (N-linked (GlcNAc...) asparagine). Ser-264 is a catalytic residue. Asp-455 is an active-site residue. N-linked (GlcNAc...) asparagine glycosylation is found at Asn-485, Asn-491, and Asn-506. Residue His-517 is part of the active site.

It belongs to the peptidase S10 family.

It localises to the vacuole. It carries out the reaction Release of a C-terminal amino acid with broad specificity.. Functionally, vacuolar carboxypeptidase involved in degradation of small peptides. Digests preferentially peptides containing an aliphatic or hydrophobic residue in P1' position, as well as methionine, leucine or phenylalanine in P1 position of ester substrate. This is Carboxypeptidase Y homolog A (CPYA) from Blastomyces gilchristii (strain SLH14081) (Blastomyces dermatitidis).